The following is a 1152-amino-acid chain: DNA-directed RNA polymerase subunit beta' (1152 aa).

Zn(2+) is bound by residues cysteine 60, cysteine 62, cysteine 75, and cysteine 78. Mg(2+)-binding residues include aspartate 449, aspartate 451, and aspartate 453. Positions 779, 853, 860, and 863 each coordinate Zn(2+).

The protein belongs to the RNA polymerase beta' chain family. In terms of assembly, the RNAP catalytic core consists of 2 alpha, 1 beta, 1 beta' and 1 omega subunit. When a sigma factor is associated with the core the holoenzyme is formed, which can initiate transcription. Mg(2+) serves as cofactor. It depends on Zn(2+) as a cofactor.

It carries out the reaction RNA(n) + a ribonucleoside 5'-triphosphate = RNA(n+1) + diphosphate. Its function is as follows. DNA-dependent RNA polymerase catalyzes the transcription of DNA into RNA using the four ribonucleoside triphosphates as substrates. The protein is DNA-directed RNA polymerase subunit beta' of Carboxydothermus hydrogenoformans (strain ATCC BAA-161 / DSM 6008 / Z-2901).